The sequence spans 323 residues: tRNA dimethylallyltransferase (323 aa).

12 to 19 (GPTAAGKT) is an ATP binding site. 14–19 (TAAGKT) serves as a coordination point for substrate. Interaction with substrate tRNA regions lie at residues 37 to 40 (DSAL) and 161 to 165 (QRLIR).

It belongs to the IPP transferase family. In terms of assembly, monomer. Requires Mg(2+) as cofactor.

It carries out the reaction adenosine(37) in tRNA + dimethylallyl diphosphate = N(6)-dimethylallyladenosine(37) in tRNA + diphosphate. Functionally, catalyzes the transfer of a dimethylallyl group onto the adenine at position 37 in tRNAs that read codons beginning with uridine, leading to the formation of N6-(dimethylallyl)adenosine (i(6)A). This is tRNA dimethylallyltransferase from Pseudomonas putida (strain W619).